The following is a 185-amino-acid chain: Lactoylglutathione lyase (185 aa).

The disordered stretch occupies residues 1–22 (MASEARESPANNPGLSTNRDEA). Residues 27–174 (IMQQTMFRIK…DGYWIEIFDL (148 aa)) enclose the VOC domain. The substrate site is built by Gln-30 and Arg-34. Gln-30 serves as a coordination point for Zn(2+). Glu-96 contacts Zn(2+). Substrate-binding positions include Asn-100, Arg-120, His-124, and 154-155 (KM). His-124 is a Zn(2+) binding site. Glu-170 lines the Zn(2+) pocket. Residue Glu-170 is the Proton donor/acceptor of the active site.

Belongs to the glyoxalase I family. Zn(2+) is required as a cofactor.

It carries out the reaction (R)-S-lactoylglutathione = methylglyoxal + glutathione. The protein operates within secondary metabolite metabolism; methylglyoxal degradation; (R)-lactate from methylglyoxal: step 1/2. Functionally, catalyzes the conversion of hemimercaptal, formed from methylglyoxal and glutathione, to S-lactoylglutathione. The sequence is that of Lactoylglutathione lyase from Arabidopsis thaliana (Mouse-ear cress).